The sequence spans 343 residues: uncharacterized protein (343 aa).

Disordered stretches follow at residues 1–27 and 205–247; these read MIREWENGCPKIGKQRARDSRAQERMT and SGGL…SKRQ. Over residues 16–27 the composition is skewed to basic and acidic residues; that stretch reads RARDSRAQERMT. Positions 219-228 are enriched in acidic residues; the sequence is GQDDGNTDDG. Basic and acidic residues predominate over residues 229–247; sequence NDVHQKGRGEVESKTSKRQ.

Functionally, dispensable for normal development and fertility. This is an uncharacterized protein from Bos taurus (Bovine).